The primary structure comprises 193 residues: ATP synthase subunit b 1 (193 aa).

A disordered region spans residues 13–32; the sequence is PAVTGGDTHSGTGVPAEAHG. A helical membrane pass occupies residues 40 to 60; it reads ATFPSQLLWLAITFGLFYLFL.

This sequence belongs to the ATPase B chain family. F-type ATPases have 2 components, F(1) - the catalytic core - and F(0) - the membrane proton channel. F(1) has five subunits: alpha(3), beta(3), gamma(1), delta(1), epsilon(1). F(0) has three main subunits: a(1), b(2) and c(10-14). The alpha and beta chains form an alternating ring which encloses part of the gamma chain. F(1) is attached to F(0) by a central stalk formed by the gamma and epsilon chains, while a peripheral stalk is formed by the delta and b chains.

It localises to the cell inner membrane. In terms of biological role, f(1)F(0) ATP synthase produces ATP from ADP in the presence of a proton or sodium gradient. F-type ATPases consist of two structural domains, F(1) containing the extramembraneous catalytic core and F(0) containing the membrane proton channel, linked together by a central stalk and a peripheral stalk. During catalysis, ATP synthesis in the catalytic domain of F(1) is coupled via a rotary mechanism of the central stalk subunits to proton translocation. Its function is as follows. Component of the F(0) channel, it forms part of the peripheral stalk, linking F(1) to F(0). The protein is ATP synthase subunit b 1 of Mesorhizobium japonicum (strain LMG 29417 / CECT 9101 / MAFF 303099) (Mesorhizobium loti (strain MAFF 303099)).